The sequence spans 200 residues: dTTP/UTP pyrophosphatase (200 aa).

D72 functions as the Proton acceptor in the catalytic mechanism.

It belongs to the Maf family. YhdE subfamily. It depends on a divalent metal cation as a cofactor.

Its subcellular location is the cytoplasm. It catalyses the reaction dTTP + H2O = dTMP + diphosphate + H(+). It carries out the reaction UTP + H2O = UMP + diphosphate + H(+). Nucleoside triphosphate pyrophosphatase that hydrolyzes dTTP and UTP. May have a dual role in cell division arrest and in preventing the incorporation of modified nucleotides into cellular nucleic acids. The sequence is that of dTTP/UTP pyrophosphatase from Pseudomonas syringae pv. syringae (strain B728a).